Here is a 265-residue protein sequence, read N- to C-terminus: Zinc transporter ZupT (265 aa).

A run of 8 helical transmembrane segments spans residues isoleucine 6–leucine 26, phenylalanine 37–isoleucine 57, tryptophan 77–valine 97, glycine 122–leucine 142, isoleucine 150–alanine 170, phenylalanine 184–leucine 204, phenylalanine 208–isoleucine 228, and cysteine 245–isoleucine 265. The Fe(2+) site is built by asparagine 133 and glutamate 136. Residues glutamate 136 and histidine 161 each contribute to the Zn(2+) site. Fe(2+) contacts are provided by asparagine 162, glutamate 165, and glutamate 194. Glutamate 165 lines the Zn(2+) pocket.

The protein belongs to the ZIP transporter (TC 2.A.5) family. ZupT subfamily.

Its subcellular location is the cell membrane. It carries out the reaction Zn(2+)(in) = Zn(2+)(out). Its function is as follows. Mediates zinc uptake. May also transport other divalent cations. This is Zinc transporter ZupT from Corynebacterium aurimucosum (strain ATCC 700975 / DSM 44827 / CIP 107346 / CN-1) (Corynebacterium nigricans).